Consider the following 75-residue polypeptide: Small ribosomal subunit protein eS17 (75 aa).

The protein belongs to the eukaryotic ribosomal protein eS17 family.

The chain is Small ribosomal subunit protein eS17 from Thermoplasma volcanium (strain ATCC 51530 / DSM 4299 / JCM 9571 / NBRC 15438 / GSS1).